The sequence spans 297 residues: Homoserine kinase (297 aa).

82–92 (PLTRGLGSSAS) serves as a coordination point for ATP.

It belongs to the GHMP kinase family. Homoserine kinase subfamily.

It localises to the cytoplasm. The catalysed reaction is L-homoserine + ATP = O-phospho-L-homoserine + ADP + H(+). Its pathway is amino-acid biosynthesis; L-threonine biosynthesis; L-threonine from L-aspartate: step 4/5. Its function is as follows. Catalyzes the ATP-dependent phosphorylation of L-homoserine to L-homoserine phosphate. In Bacillus anthracis (strain CDC 684 / NRRL 3495), this protein is Homoserine kinase.